Here is a 555-residue protein sequence, read N- to C-terminus: Prespore protein Dp87 (555 aa).

The first 22 residues, 1–22 (MRILYLASLLFLITLYLSPTFG), serve as a signal peptide directing secretion. Residues 27–144 (RDCESHRSEY…RIPRCVGHHG (118 aa)) enclose the DSCP-N domain. The N-linked (GlcNAc...) asparagine glycan is linked to asparagine 103. Follistatin-like domains lie at 148 to 170 (KCDRMRCPEGFYCEEQGGSACCV), 175 to 197 (GCGNIQCPWGHYCVNEHGKCRCV), 209 to 231 (QCRNQHCPHGYSCRVIKGCATCV), 240 to 262 (LCRGFGCPEGSHCEVLEKHPVCV), 276 to 298 (ICGSVNCGPGYICTIINGHPTCI), 304 to 327 (LCNQTRCPHDYQCETISTNIVKCS), 332 to 354 (ECKWHRCPPGSSCFNSRNGPHCL), and 362 to 384 (LCKVTQCPTDFSCKMIRGNPTCI). A glycan (N-linked (GlcNAc...) asparagine) is linked at asparagine 306. N-linked (GlcNAc...) asparagine glycosylation occurs at asparagine 418. The segment at 454 to 555 (TTSATTAGTT…ESSESSSATS (102 aa)) is disordered. Residues 470 to 555 (GGSTSDSSAA…ESSESSSATS (86 aa)) are compositionally biased toward low complexity.

The protein resides in the spore wall. This chain is Prespore protein Dp87 (cotD), found in Dictyostelium discoideum (Social amoeba).